The chain runs to 115 residues: Small ribosomal subunit protein bS6 (115 aa).

The protein belongs to the bacterial ribosomal protein bS6 family.

In terms of biological role, binds together with bS18 to 16S ribosomal RNA. This chain is Small ribosomal subunit protein bS6, found in Picosynechococcus sp. (strain ATCC 27264 / PCC 7002 / PR-6) (Agmenellum quadruplicatum).